The primary structure comprises 59 residues: Cytochrome c oxidase subunit 9, mitochondrial (59 aa).

Residues Thr-2–Gly-8 lie on the Mitochondrial matrix side of the membrane. The chain crosses the membrane as a helical span at residues Thr-9–Arg-44. At Glu-45–Lys-56 the chain is on the mitochondrial intermembrane side. Positions Gln-57–Asn-59 are cleaved as a propeptide — removed in mature form.

The protein belongs to the fungal cytochrome c oxidase subunit 7a family. In terms of assembly, component of the cytochrome c oxidase (complex IV, CIV), a multisubunit enzyme composed of 12 subunits. The complex is composed of a catalytic core of 3 subunits COX1, COX2 and COX3, encoded in the mitochondrial DNA, and 9 supernumerary subunits COX4, COX5A (or COX5B), COX6, COX7, COX8, COX9, COX12, COX13 and COX26, which are encoded in the nuclear genome. The complex exists as a monomer or a dimer and forms supercomplexes (SCs) in the inner mitochondrial membrane with a dimer of ubiquinol-cytochrome c oxidoreductase (cytochrome b-c1 complex, complex III, CIII), resulting in 2 different assemblies (supercomplexes III(2)IV and III(2)IV(2)).

It is found in the mitochondrion inner membrane. It functions in the pathway energy metabolism; oxidative phosphorylation. Functionally, component of the cytochrome c oxidase, the last enzyme in the mitochondrial electron transport chain which drives oxidative phosphorylation. The respiratory chain contains 3 multisubunit complexes succinate dehydrogenase (complex II, CII), ubiquinol-cytochrome c oxidoreductase (cytochrome b-c1 complex, complex III, CIII) and cytochrome c oxidase (complex IV, CIV), that cooperate to transfer electrons derived from NADH and succinate to molecular oxygen, creating an electrochemical gradient over the inner membrane that drives transmembrane transport and the ATP synthase. Cytochrome c oxidase is the component of the respiratory chain that catalyzes the reduction of oxygen to water. Electrons originating from reduced cytochrome c in the intermembrane space (IMS) are transferred via the dinuclear copper A center (CU(A)) of COX2 and heme A of COX1 to the active site in COX1, a binuclear center (BNC) formed by heme A3 and copper B (CU(B)). The BNC reduces molecular oxygen to 2 water molecules using 4 electrons from cytochrome c in the IMS and 4 protons from the mitochondrial matrix. The protein is Cytochrome c oxidase subunit 9, mitochondrial (COX9) of Saccharomyces cerevisiae (strain ATCC 204508 / S288c) (Baker's yeast).